The following is a 288-amino-acid chain: Nucleotide-binding protein PM0169 (288 aa).

Residue 8–15 (GHSGAGKS) coordinates ATP. Position 56 to 59 (56 to 59 (DIRN)) interacts with GTP.

This sequence belongs to the RapZ-like family.

Its function is as follows. Displays ATPase and GTPase activities. The polypeptide is Nucleotide-binding protein PM0169 (Pasteurella multocida (strain Pm70)).